The chain runs to 115 residues: HTH-type transcriptional regulator SarR (115 aa).

Positions 51–74 (SKEIAKCSEFKPYYLTKALQKLKD) form a DNA-binding region, H-T-H motif.

It belongs to the SarA family. Homodimer.

Its subcellular location is the cytoplasm. Functionally, negative regulator of sarA transcription at late exponential and stationary growth phases. It contributes to the modulation of target genes downstream of the sarA regulatory cascade. Also, positively regulates expression of primary transcripts RNAII and RNAIII generated by agr (virulence accessory gene regulator) locus. This chain is HTH-type transcriptional regulator SarR (sarR), found in Staphylococcus aureus (strain NCTC 8325 / PS 47).